The following is a 402-amino-acid chain: Probable sugar efflux transporter (402 aa).

12 helical membrane-spanning segments follow: residues 15-35 (VLIMACAGFIFNTTEFVPVAM), 51-71 (GLMMTVYAWTVLIMSLPAMLA), 84-104 (LFIIFIVGHILLVIAWNFWIL), 109-129 (MCIALAHSVFWSITASLVMRI), 137-157 (QALGMLAIGTALATILGLPIG), 168-188 (VTFGIIAVLALSIMFLIIRLL), 209-229 (PLLLWLYVTTAIVISAHFTAY), 245-265 (NFATAVLLVFGFSGIAASLLF), 276-296 (FIVVSMSLLMFSLLLLLFSTE), 297-317 (AIIAMFSLVFIWGIGISCIGL), 333-353 (VATAIYSGIFNAGIGAGALFG), and 365-385 (IGYTGAALGLIGFIIFITTHL).

This sequence belongs to the major facilitator superfamily. SotB (TC 2.A.1.2) family.

Its subcellular location is the cell inner membrane. Functionally, involved in the efflux of sugars. The physiological role may be the reduction of the intracellular concentration of toxic sugars or sugar metabolites. The sequence is that of Probable sugar efflux transporter from Haemophilus influenzae (strain 86-028NP).